Here is a 104-residue protein sequence, read N- to C-terminus: MEREMAHDERLHVHCGMGLGRTTIFIVMHDILRNAAMLSFDDIIERQRKFNPGRSLDNNKDVSDKGRSEFRNERSEFLPLFYEYAKQNPKGQPLLWSEWLDHNA.

The tract at residues 51–70 is disordered; the sequence is NPGRSLDNNKDVSDKGRSEF. The span at 57 to 70 shows a compositional bias: basic and acidic residues; sequence DNNKDVSDKGRSEF.

Belongs to the protein-tyrosine phosphatase family.

This is an uncharacterized protein from Xanthomonas campestris pv. campestris (strain ATCC 33913 / DSM 3586 / NCPPB 528 / LMG 568 / P 25).